We begin with the raw amino-acid sequence, 164 residues long: Cyanate hydratase (164 aa).

Active-site residues include R104, E107, and S130.

This sequence belongs to the cyanase family.

It catalyses the reaction cyanate + hydrogencarbonate + 3 H(+) = NH4(+) + 2 CO2. Functionally, catalyzes the reaction of cyanate with bicarbonate to produce ammonia and carbon dioxide. This is Cyanate hydratase from Botryotinia fuckeliana (strain B05.10) (Noble rot fungus).